The sequence spans 266 residues: Thymidylate synthase (266 aa).

Arg24 serves as a coordination point for dUMP. Residue His54 participates in (6R)-5,10-methylene-5,6,7,8-tetrahydrofolate binding. 129–130 (RR) serves as a coordination point for dUMP. Catalysis depends on Cys149, which acts as the Nucleophile. DUMP contacts are provided by residues 169–172 (RSAD), Asn180, and 210–212 (HIY). (6R)-5,10-methylene-5,6,7,8-tetrahydrofolate is bound at residue Asp172. Ala265 provides a ligand contact to (6R)-5,10-methylene-5,6,7,8-tetrahydrofolate.

The protein belongs to the thymidylate synthase family. Bacterial-type ThyA subfamily. In terms of assembly, homodimer.

The protein localises to the cytoplasm. The enzyme catalyses dUMP + (6R)-5,10-methylene-5,6,7,8-tetrahydrofolate = 7,8-dihydrofolate + dTMP. It participates in pyrimidine metabolism; dTTP biosynthesis. In terms of biological role, catalyzes the reductive methylation of 2'-deoxyuridine-5'-monophosphate (dUMP) to 2'-deoxythymidine-5'-monophosphate (dTMP) while utilizing 5,10-methylenetetrahydrofolate (mTHF) as the methyl donor and reductant in the reaction, yielding dihydrofolate (DHF) as a by-product. This enzymatic reaction provides an intracellular de novo source of dTMP, an essential precursor for DNA biosynthesis. The sequence is that of Thymidylate synthase from Mycobacterium leprae (strain TN).